The chain runs to 337 residues: Ferrochelatase (337 aa).

Fe cation-binding residues include His189 and Glu293.

The protein belongs to the ferrochelatase family.

The protein localises to the cytoplasm. It catalyses the reaction heme b + 2 H(+) = protoporphyrin IX + Fe(2+). Its pathway is porphyrin-containing compound metabolism; protoheme biosynthesis; protoheme from protoporphyrin-IX: step 1/1. Its function is as follows. Catalyzes the ferrous insertion into protoporphyrin IX. This is Ferrochelatase from Pseudomonas putida (strain W619).